The primary structure comprises 297 residues: Adrenocorticotropic hormone receptor (297 aa).

Residues 1 to 23 (MKHIITPYEHTNDTARNNSDCPD) lie on the Extracellular side of the membrane. Residues Asn-12 and Asn-17 are each glycosylated (N-linked (GlcNAc...) asparagine). Cystine bridges form between Cys-21–Cys-253 and Cys-245–Cys-251. Residues 24–49 (VVLPEEIFFTISIIGVLENLIVLLAV) form a helical membrane-spanning segment. Residues 50–58 (VKNKNLQCP) are Cytoplasmic-facing. The helical transmembrane segment at 59–79 (MYFFICSLAISDMLGSLYKIL) threads the bilayer. Topologically, residues 80–104 (ENILIMFRNRGYLQPRGNFESTADD) are extracellular. A helical membrane pass occupies residues 105–126 (IIDCMFILSLLGSIFSLSVIAA). Topologically, residues 127 to 147 (DRYITIFHALQYHSIVTMRRT) are cytoplasmic. The chain crosses the membrane as a helical span at residues 148–168 (IITLTVIWIFCTGSGIAMVIF). Over 169–180 (SHHVPTVLTFTS) the chain is Extracellular. Residues 181–199 (LFPLMLVFILCLYIHMFLL) form a helical membrane-spanning segment. The Cytoplasmic portion of the chain corresponds to 200 to 217 (ARSHARKISTLPRANMKG). Residues 218 to 244 (AITLTILLGVFIFCWAPFILHVLLMTF) form a helical membrane-spanning segment. Residues 245 to 256 (CPNNPYCVCYMS) are Extracellular-facing. The helical transmembrane segment at 257–278 (LFQINGMLIMCNAVIDPFIYAF) threads the bilayer. The Cytoplasmic segment spans residues 279–297 (RSPELRDAFKKMFSCHRYQ). Cys-293 carries the S-palmitoyl cysteine lipid modification.

This sequence belongs to the G-protein coupled receptor 1 family. Homodimer. Interacts with corticotropin (ACTH). Interacts with MRAP; this interaction targets MC2R to the plasma membrane. Interacts with MRAP2; competing with MRAP for binding to MC2R and impairing the binding of corticotropin (ACTH). Ubiquitinated by MGRN1 that may be involved in post-endocytic trafficking and/or degradation of internalized receptor.

The protein localises to the cell membrane. In terms of biological role, hormone receptor primarily expressed in adrenal cortex that plays a key role in regulating adrenocortical function. Upon corticotropin (ACTH) binding, facilitates the release of adrenal glucocorticoids, including cortisol and corticosterone. In addition, MC2R is required for fetal and neonatal adrenal gland development. Mechanistically, activates adenylate cyclase (cAMP), the MAPK cascade as well as the cAMP-dependent protein kinase A pathway leading to steroidogenic factor 1/NR5A1-mediated transcriptional activation. This chain is Adrenocorticotropic hormone receptor (MC2R), found in Mesocricetus auratus (Golden hamster).